The following is a 302-amino-acid chain: D-alanine--D-alanine ligase (302 aa).

An ATP-grasp domain is found at 99–298 (KRLFVAEGIP…FEQLIQRIID (200 aa)). 128–183 (LAALGSPVVVKPADGGSTVGVTIAREAGHLPEAVRLALQYSPQVLIEQYIPGQEIT) lines the ATP pocket. Aspartate 252, glutamate 265, and asparagine 267 together coordinate Mg(2+).

Belongs to the D-alanine--D-alanine ligase family. The cofactor is Mg(2+). It depends on Mn(2+) as a cofactor.

It is found in the cytoplasm. The catalysed reaction is 2 D-alanine + ATP = D-alanyl-D-alanine + ADP + phosphate + H(+). The protein operates within cell wall biogenesis; peptidoglycan biosynthesis. Cell wall formation. The protein is D-alanine--D-alanine ligase of Gloeobacter violaceus (strain ATCC 29082 / PCC 7421).